The chain runs to 393 residues: Staphopain B (393 aa).

Residues 1–36 (MNSSCKTRVFNIISIIMVSMLILSLGAFANNNKAKA) form the signal peptide. A propeptide spanning residues 37–219 (DSHSKQLEIN…KVEENEAIQE (183 aa)) is cleaved from the precursor. Residues C243, H340, and N360 contribute to the active site.

The protein belongs to the peptidase C47 family. As to quaternary structure, in the cytoplasm, prematurely activated/folded SspB forms a stable non-covalent complex with SspC. Proteolytically cleaved by staphylococcal serine protease (SspA).

The protein resides in the secreted. Prematurely activated/folded staphopain B is inhibited by staphostatin B (SspC), which is probably required to protect staphylococcal cytoplasmic proteins from degradation by SspB. Functionally, cysteine protease that plays an important role in the inhibition of host innate immune response. Degrades host elastin, fibrogen, fibronectin and kininogen. Blocks phagocytosis of opsonised S.aureus by neutrophils and monocytes by inducing their death in a proteolytic activity-dependent manner. Decreases surface expression of the 'don't eat me' signal CD31 on neutrophils. Cleaves host galectin-3/LGALS3, thereby inhibiting the neutrophil-activating ability of the lectin. The polypeptide is Staphopain B (sspB) (Staphylococcus aureus).